Here is a 308-residue protein sequence, read N- to C-terminus: Glutaminase (308 aa).

Positions 66, 117, 161, 168, 192, 244, and 262 each coordinate substrate.

The protein belongs to the glutaminase family. In terms of assembly, homotetramer.

It catalyses the reaction L-glutamine + H2O = L-glutamate + NH4(+). The sequence is that of Glutaminase from Enterobacter sp. (strain 638).